Reading from the N-terminus, the 266-residue chain is Glucosamine-6-phosphate deaminase (266 aa).

The active-site Proton acceptor; for enolization step is the aspartate 72. The For ring-opening step role is filled by aspartate 141. Catalysis depends on histidine 143, which acts as the Proton acceptor; for ring-opening step. The active-site For ring-opening step is glutamate 148.

The protein belongs to the glucosamine/galactosamine-6-phosphate isomerase family. NagB subfamily. In terms of assembly, homohexamer.

The enzyme catalyses alpha-D-glucosamine 6-phosphate + H2O = beta-D-fructose 6-phosphate + NH4(+). It functions in the pathway amino-sugar metabolism; N-acetylneuraminate degradation; D-fructose 6-phosphate from N-acetylneuraminate: step 5/5. Its activity is regulated as follows. Allosterically activated by N-acetylglucosamine 6-phosphate (GlcNAc6P). Catalyzes the reversible isomerization-deamination of glucosamine 6-phosphate (GlcN6P) to form fructose 6-phosphate (Fru6P) and ammonium ion. This is Glucosamine-6-phosphate deaminase from Edwardsiella ictaluri (strain 93-146).